The following is a 163-amino-acid chain: Crossover junction endodeoxyribonuclease RuvC (163 aa).

Residues Asp-9, Glu-76, and Asp-148 contribute to the active site. Mg(2+) contacts are provided by Asp-9, Glu-76, and Asp-148.

The protein belongs to the RuvC family. Homodimer which binds Holliday junction (HJ) DNA. The HJ becomes 2-fold symmetrical on binding to RuvC with unstacked arms; it has a different conformation from HJ DNA in complex with RuvA. In the full resolvosome a probable DNA-RuvA(4)-RuvB(12)-RuvC(2) complex forms which resolves the HJ. Mg(2+) serves as cofactor.

The protein resides in the cytoplasm. The enzyme catalyses Endonucleolytic cleavage at a junction such as a reciprocal single-stranded crossover between two homologous DNA duplexes (Holliday junction).. In terms of biological role, the RuvA-RuvB-RuvC complex processes Holliday junction (HJ) DNA during genetic recombination and DNA repair. Endonuclease that resolves HJ intermediates. Cleaves cruciform DNA by making single-stranded nicks across the HJ at symmetrical positions within the homologous arms, yielding a 5'-phosphate and a 3'-hydroxyl group; requires a central core of homology in the junction. The consensus cleavage sequence is 5'-(A/T)TT(C/G)-3'. Cleavage occurs on the 3'-side of the TT dinucleotide at the point of strand exchange. HJ branch migration catalyzed by RuvA-RuvB allows RuvC to scan DNA until it finds its consensus sequence, where it cleaves and resolves the cruciform DNA. The protein is Crossover junction endodeoxyribonuclease RuvC of Trichormus variabilis (strain ATCC 29413 / PCC 7937) (Anabaena variabilis).